We begin with the raw amino-acid sequence, 118 residues long: UPF0102 protein Francci3_3586 (118 aa).

It belongs to the UPF0102 family.

This is UPF0102 protein Francci3_3586 from Frankia casuarinae (strain DSM 45818 / CECT 9043 / HFP020203 / CcI3).